The sequence spans 181 residues: Immunity-related GTPase family M protein (181 aa).

The 150-residue stretch at 32–181 (TPVNITMAGD…NLQKERVCEY (150 aa)) folds into the IRG-type G domain. GTP is bound by residues 41–48 (DSGNGMST), 66–70 (TELVK), and 147–149 (KLD).

This sequence belongs to the TRAFAC class dynamin-like GTPase superfamily. IRG family. As to quaternary structure, interacts with ULK1; promoting the coassembly of ULK1 and BECN1. Interacts with BECN1; enhancing BECN1-interacting partners and influencing the composition of the BECN1 complex. Interacts with ATG16L1. Interacts with NOD2; promoting IRGM 'Lys-63'-linked polyubiquitination, which is required for interactions with the core autophagy factors. Interacts with STX17; promoting STX17 recruitment to autophagosomes. Interacts with ATG8 proteins (GABARAP, GABARAPL1, GABARAPL2, MAP1LC3A, MAP1LC3B and MAP1LC3C); promoting STX17 recruitment to autophagosomes. Interacts with TFEB; promoting association between TFEB and PPP3CB and TFEB dephosphorylation. Interacts with PPP3CB; promoting association between TFEB and PPP3CB and TFEB dephosphorylation. Interacts with NLRP3; preventing NLRP3 inflammasome assembly and promoting SQSTM1/p62-dependent autophagic degradation of NLRP3. Interacts with CGAS; promoting SQSTM1/p62-dependent autophagic degradation of CGAS. Interacts with RIGI/RIG-I; promoting SQSTM1/p62-dependent autophagic degradation of RIGI/RIG-I. Interacts with NOD1; promoting SQSTM1/p62-dependent autophagic degradation of RIGI/RIG-I. Interacts with NOD2; promoting SQSTM1/p62-dependent autophagic degradation of RIGI/RIG-I. Interacts with RIPK2; promoting SQSTM1/p62-dependent autophagic degradation of RIGI/RIG-I. In terms of processing, ubiquitinated via 'Lys-63'-linked polyubiquitination in a NOD2-dependent process. 'Lys-63'-linked polyubiquitination is required for interactions with the core autophagy factors. Widely expressed (at protein level). Expressed in several tissues including colon, small bowel and peripheral blood leukocytes.

The protein localises to the golgi apparatus membrane. It localises to the cell membrane. The protein resides in the cytoplasmic vesicle. It is found in the phagosome membrane. Its subcellular location is the autophagosome membrane. The protein localises to the lysosome membrane. It localises to the late endosome membrane. The protein resides in the mitochondrion membrane. It is found in the cell projection. Its subcellular location is the phagocytic cup. The protein localises to the mitochondrion. It catalyses the reaction GTP + H2O = GDP + phosphate + H(+). In terms of biological role, immunity-related GTPase that plays important roles in innate immunity and inflammatory response. Acts as a dynamin-like protein that binds to intracellular membranes and promotes remodeling and trafficking of those membranes. Required for clearance of acute protozoan and bacterial infections by interacting with autophagy and lysosome regulatory proteins, thereby promoting the fusion of phagosomes with lysosomes for efficient degradation of cargo including microbes. Regulates selective autophagy, including xenophagy and mitophagy, both directly and indirectly. Directly regulates autophagy by acting as a molecular adapter that promotes the coassembly of the core autophagy machinery to mediate antimicrobial defense: IRGM (1) activates AMPK, which in turn phosphorylates ULK1 and BECN1 to induce autophagy, (2) promotes the coassembly of ULK1 and BECN1, enhancing BECN1-interacting partners and (3) influences the composition of the BECN1 complex, by competing with the negative regulators BCL2 and RUBCN, to trigger autophagy. Also activates autophagy by promoting recruitment of STX17 to autophagosomes. In collaboration with ATG8 proteins, regulate lysosomal biogenesis, a fundamental process for any autophagic pathway, by promoting TFEB dephosphorylation. Also modulates autophagy by assisting with autophagosome formation and preventing lysosomal deacidification. While activating autophagy, acts as a key negative regulator of the inflammatory and interferon responses both by (1) promoting mitophagy and (2) mediating autophagy-dependent degradation of effectors of the inflammatory response. Promotes degradation of damaged and IFNG/IFN-gamma-stressed mitochondria via mitophagy, preventing cytosolic release of ligands that activate inflammation. Acts as a suppressor of inflammation by promoting recruitment of inflammation effectors, such as CGAS, RIGI/RIG-I and NLRP3, to autophagosome membranes, leading to their SQSTM1/p62-dependent autophagic degradation. Also directly inhibits assembly of the NLRP3 inflammasome by preventing the association between NLRP3 and PYCARD. Acts as a negative regulator of antiviral innate immune response by suppressing the RIPK2-dependent pro-inflammatory response: mediates recruitment of RIPosomes, composed of RIPK2 and NOD1 or NOD2, to autophagosome membranes, promoting their SQSTM1/p62-dependent autophagic degradation. Acts as a positive regulator of mitophagy in response to intracellular mycobacteria infection: specifically binds cardiolipin, leading to its translocation to mitochondria, where it promotes affected mitochondrial fission and mitophagy. Its function is as follows. (Microbial infection) Following infection by hepatitis C virus (HCV), promotes HCV-triggered membrane remodeling, leading to autophagy and Golgi fragmentation, a step required for HCV replication. This is Immunity-related GTPase family M protein from Homo sapiens (Human).